Here is a 550-residue protein sequence, read N- to C-terminus: Tyrosinase HcTyr2 (550 aa).

Cu cation is bound by residues histidine 56, histidine 84, histidine 93, histidine 282, histidine 286, and histidine 326.

The protein belongs to the tyrosinase family. Requires Cu(2+) as cofactor.

It carries out the reaction L-tyrosine + O2 = L-dopaquinone + H2O. The enzyme catalyses 2 L-tyrosine + O2 = 2 L-dopa. It catalyses the reaction 2 L-dopa + O2 = 2 L-dopaquinone + 2 H2O. Copper-containing oxidase that catalyzes the conversion of L-tyrosine to L-dopa and then to L-dopaquinone. Can use various phenols such as p-coumaric acid, phenol, pyrocatechol, syringol or pyrogallol. Accepts several of the constituents of lignin and potentially participates in lignin functionalization. This chain is Tyrosinase HcTyr2, found in Hahella sp. (strain CCB-MM4).